Reading from the N-terminus, the 342-residue chain is Replication factor C subunit 3 (342 aa).

Position 63-70 (63-70) interacts with ATP; the sequence is GPPGTGKT.

The protein belongs to the activator 1 small subunits family. As to quaternary structure, heteropentamer of subunits rfc1, rfc2, rfc3, rfc4 and rfc5 that forms a complex (RFC) with PCNA in the presence of ATP. Two other complexes exist where rfc1 can be replaced by either ctf18 or elg1 to form the ctf18-RFC or the elg1-RFC complexes respectively.

Its subcellular location is the nucleus. Functionally, the elongation of primed DNA templates by DNA polymerase delta and epsilon requires the action of the accessory proteins PCNA and activator 1. Subunit 3 binds ATP. Also involved in replication and DNA damage checkpoint controls, probably functioning as a checkpoint sensor. This Schizosaccharomyces pombe (strain 972 / ATCC 24843) (Fission yeast) protein is Replication factor C subunit 3 (rfc3).